An 849-amino-acid chain; its full sequence is Glycogen phosphorylase (849 aa).

Residue K679 is modified to N6-(pyridoxal phosphate)lysine.

This sequence belongs to the glycogen phosphorylase family. Pyridoxal 5'-phosphate serves as cofactor.

It carries out the reaction [(1-&gt;4)-alpha-D-glucosyl](n) + phosphate = [(1-&gt;4)-alpha-D-glucosyl](n-1) + alpha-D-glucose 1-phosphate. In terms of biological role, phosphorylase is an important allosteric enzyme in carbohydrate metabolism. Enzymes from different sources differ in their regulatory mechanisms and in their natural substrates. However, all known phosphorylases share catalytic and structural properties. The chain is Glycogen phosphorylase (glgP) from Synechocystis sp. (strain ATCC 27184 / PCC 6803 / Kazusa).